The primary structure comprises 424 residues: Omega-6 fatty acid desaturase, chloroplastic (424 aa).

A chloroplast-targeting transit peptide spans 1-63 (MACTLADSLL…TRNKVTVIHA (63 aa)). Valine 64 carries the post-translational modification N-acetylvaline. Residues 165 to 169 (HDCAH) carry the Histidine box-1 motif. Residues 201 to 205 (HDRHH) carry the Histidine box-2 motif. The short motif at 361–365 (HIPHH) is the Histidine box-3 element.

The protein belongs to the fatty acid desaturase type 1 family.

It localises to the plastid. The protein resides in the chloroplast membrane. It carries out the reaction a (9Z)-octadecenoyl-containing glycerolipid + 2 reduced [2Fe-2S]-[ferredoxin] + O2 + 2 H(+) = a (9Z,12Z)-octadecadienoyl-containing glycerolipid + 2 oxidized [2Fe-2S]-[ferredoxin] + 2 H2O. Its pathway is lipid metabolism; polyunsaturated fatty acid biosynthesis. Functionally, chloroplast omega-6 fatty acid desaturase introduces the second double bond in the biosynthesis of 16:3 and 18:3 fatty acids, important constituents of plant membranes. It is thought to use ferredoxin as an electron donor and to act on fatty acids esterified to galactolipids, sulfolipids and phosphatidylglycerol. In Glycine max (Soybean), this protein is Omega-6 fatty acid desaturase, chloroplastic.